Consider the following 190-residue polypeptide: Hypoxanthine/guanine phosphoribosyltransferase (190 aa).

This sequence belongs to the purine/pyrimidine phosphoribosyltransferase family. Archaeal HPRT subfamily. In terms of assembly, homodimer.

Its subcellular location is the cytoplasm. It carries out the reaction IMP + diphosphate = hypoxanthine + 5-phospho-alpha-D-ribose 1-diphosphate. The catalysed reaction is GMP + diphosphate = guanine + 5-phospho-alpha-D-ribose 1-diphosphate. It functions in the pathway purine metabolism; IMP biosynthesis via salvage pathway; IMP from hypoxanthine: step 1/1. Its function is as follows. Catalyzes a salvage reaction resulting in the formation of IMP that is energically less costly than de novo synthesis. This is Hypoxanthine/guanine phosphoribosyltransferase from Methanohalophilus mahii (strain ATCC 35705 / DSM 5219 / SLP).